Here is a 234-residue protein sequence, read N- to C-terminus: 2-C-methyl-D-erythritol 4-phosphate cytidylyltransferase (234 aa).

The protein belongs to the IspD/TarI cytidylyltransferase family. IspD subfamily.

The catalysed reaction is 2-C-methyl-D-erythritol 4-phosphate + CTP + H(+) = 4-CDP-2-C-methyl-D-erythritol + diphosphate. It functions in the pathway isoprenoid biosynthesis; isopentenyl diphosphate biosynthesis via DXP pathway; isopentenyl diphosphate from 1-deoxy-D-xylulose 5-phosphate: step 2/6. In terms of biological role, catalyzes the formation of 4-diphosphocytidyl-2-C-methyl-D-erythritol from CTP and 2-C-methyl-D-erythritol 4-phosphate (MEP). The sequence is that of 2-C-methyl-D-erythritol 4-phosphate cytidylyltransferase from Thermosynechococcus vestitus (strain NIES-2133 / IAM M-273 / BP-1).